The chain runs to 331 residues: Glycerol-3-phosphate dehydrogenase [NAD(P)+] (331 aa).

W13, R33, and K103 together coordinate NADPH. Sn-glycerol 3-phosphate is bound by residues K103, G131, and T133. A135 contacts NADPH. Positions 187, 240, 250, 251, and 252 each coordinate sn-glycerol 3-phosphate. The active-site Proton acceptor is the K187. An NADPH-binding site is contributed by R251. Residues V275 and E277 each coordinate NADPH.

The protein belongs to the NAD-dependent glycerol-3-phosphate dehydrogenase family.

The protein localises to the cytoplasm. The enzyme catalyses sn-glycerol 3-phosphate + NAD(+) = dihydroxyacetone phosphate + NADH + H(+). The catalysed reaction is sn-glycerol 3-phosphate + NADP(+) = dihydroxyacetone phosphate + NADPH + H(+). Its pathway is membrane lipid metabolism; glycerophospholipid metabolism. In terms of biological role, catalyzes the reduction of the glycolytic intermediate dihydroxyacetone phosphate (DHAP) to sn-glycerol 3-phosphate (G3P), the key precursor for phospholipid synthesis. The chain is Glycerol-3-phosphate dehydrogenase [NAD(P)+] from Novosphingobium aromaticivorans (strain ATCC 700278 / DSM 12444 / CCUG 56034 / CIP 105152 / NBRC 16084 / F199).